The sequence spans 779 residues: Phosphoribosylformylglycinamidine synthase subunit PurL (779 aa).

His52 is an active-site residue. Residues Tyr55 and Lys94 each contribute to the ATP site. Glu96 contacts Mg(2+). Substrate-binding positions include Ser97–His100 and Arg119. His98 functions as the Proton acceptor in the catalytic mechanism. Asp120 is a binding site for Mg(2+). Substrate is bound at residue Gln243. Asp271 contacts Mg(2+). Glu315–Gln317 provides a ligand contact to substrate. Residues Asn523 and Gly560 each contribute to the ATP site. Asn561 is a binding site for Mg(2+). Ser563 contacts substrate.

Belongs to the FGAMS family. Monomer. Part of the FGAM synthase complex composed of 1 PurL, 1 PurQ and 2 PurS subunits.

Its subcellular location is the cytoplasm. The enzyme catalyses N(2)-formyl-N(1)-(5-phospho-beta-D-ribosyl)glycinamide + L-glutamine + ATP + H2O = 2-formamido-N(1)-(5-O-phospho-beta-D-ribosyl)acetamidine + L-glutamate + ADP + phosphate + H(+). Its pathway is purine metabolism; IMP biosynthesis via de novo pathway; 5-amino-1-(5-phospho-D-ribosyl)imidazole from N(2)-formyl-N(1)-(5-phospho-D-ribosyl)glycinamide: step 1/2. Its function is as follows. Part of the phosphoribosylformylglycinamidine synthase complex involved in the purines biosynthetic pathway. Catalyzes the ATP-dependent conversion of formylglycinamide ribonucleotide (FGAR) and glutamine to yield formylglycinamidine ribonucleotide (FGAM) and glutamate. The FGAM synthase complex is composed of three subunits. PurQ produces an ammonia molecule by converting glutamine to glutamate. PurL transfers the ammonia molecule to FGAR to form FGAM in an ATP-dependent manner. PurS interacts with PurQ and PurL and is thought to assist in the transfer of the ammonia molecule from PurQ to PurL. The sequence is that of Phosphoribosylformylglycinamidine synthase subunit PurL from Prochlorococcus marinus (strain AS9601).